The sequence spans 161 residues: SsrA-binding protein (161 aa).

Belongs to the SmpB family.

It is found in the cytoplasm. Its function is as follows. Required for rescue of stalled ribosomes mediated by trans-translation. Binds to transfer-messenger RNA (tmRNA), required for stable association of tmRNA with ribosomes. tmRNA and SmpB together mimic tRNA shape, replacing the anticodon stem-loop with SmpB. tmRNA is encoded by the ssrA gene; the 2 termini fold to resemble tRNA(Ala) and it encodes a 'tag peptide', a short internal open reading frame. During trans-translation Ala-aminoacylated tmRNA acts like a tRNA, entering the A-site of stalled ribosomes, displacing the stalled mRNA. The ribosome then switches to translate the ORF on the tmRNA; the nascent peptide is terminated with the 'tag peptide' encoded by the tmRNA and targeted for degradation. The ribosome is freed to recommence translation, which seems to be the essential function of trans-translation. This Vesicomyosocius okutanii subsp. Calyptogena okutanii (strain HA) protein is SsrA-binding protein.